We begin with the raw amino-acid sequence, 243 residues long: CD48 antigen (243 aa).

A signal peptide spans 1–26; sequence MCSRGWDSCLALELLLLPLSLLVTSI. 2 Ig-like C2-type domains span residues 29 to 127 and 132 to 212; these read HLVH…KLQV and PKPV…VCLS. N-linked (GlcNAc...) asparagine glycosylation is found at asparagine 40, asparagine 44, asparagine 104, asparagine 162, and asparagine 189. The cysteines at positions 154 and 196 are disulfide-linked. The GPI-anchor amidated serine moiety is linked to residue serine 220. A propeptide spans 221 to 243 (removed in mature form); that stretch reads FGVEWIASWLVVTVPTILGLLLT.

As to quaternary structure, interacts with CD2. Interacts with CD244; this interaction is possible not only on different cells (trans interaction) but also on the same cell (cis interaction). Interacts with LCK. Widely expressed on all hematopoietic cells.

It is found in the cell membrane. It localises to the membrane raft. Its subcellular location is the secreted. Functionally, glycosylphosphatidylinositol (GPI)-anchored cell surface glycoprotein that interacts via its N-terminal immunoglobulin domain with cell surface receptors including CD244/2B4 or CD2 to regulate immune cell function and activation. Participates in T-cell signaling transduction by associating with CD2 and efficiently bringing the Src family protein kinase LCK and LAT to the TCR/CD3 complex. In turn, promotes LCK phosphorylation and subsequent activation. Induces the phosphorylation of the cytoplasmic immunoreceptortyrosine switch motifs (ITSMs) of CD244 initiating a series of signaling events that leads to the generation of the immunological synapse and the directed release of cytolytic granules containing perforin and granzymes by T-lymphocytes and NK-cells. The polypeptide is CD48 antigen (CD48) (Homo sapiens (Human)).